The primary structure comprises 289 residues: Lipoyl synthase (289 aa).

Residues C33, C38, C44, C59, C63, C66, and S274 each contribute to the [4Fe-4S] cluster site. Residues 45-263 (FAGGTATFLI…SQGESELGFL (219 aa)) form the Radical SAM core domain.

Belongs to the radical SAM superfamily. Lipoyl synthase family. [4Fe-4S] cluster serves as cofactor.

The protein resides in the cytoplasm. The enzyme catalyses [[Fe-S] cluster scaffold protein carrying a second [4Fe-4S](2+) cluster] + N(6)-octanoyl-L-lysyl-[protein] + 2 oxidized [2Fe-2S]-[ferredoxin] + 2 S-adenosyl-L-methionine + 4 H(+) = [[Fe-S] cluster scaffold protein] + N(6)-[(R)-dihydrolipoyl]-L-lysyl-[protein] + 4 Fe(3+) + 2 hydrogen sulfide + 2 5'-deoxyadenosine + 2 L-methionine + 2 reduced [2Fe-2S]-[ferredoxin]. It functions in the pathway protein modification; protein lipoylation via endogenous pathway; protein N(6)-(lipoyl)lysine from octanoyl-[acyl-carrier-protein]: step 2/2. Catalyzes the radical-mediated insertion of two sulfur atoms into the C-6 and C-8 positions of the octanoyl moiety bound to the lipoyl domains of lipoate-dependent enzymes, thereby converting the octanoylated domains into lipoylated derivatives. In Synechococcus sp. (strain RCC307), this protein is Lipoyl synthase.